A 301-amino-acid polypeptide reads, in one-letter code: MADQLIKATAADGGIRAVGVISTRLTEEARARHKLSYVATAALGRAMTAGLLLASNMKREGSRVNLRIKGNGPLGGLLVDAGLDGTVRGYVDCPFVELPPNARGKLDVGGAIGREGYLYVVRDVGYGYPYSSTVELISGEVGDDVTHYLATSEQTPSALLLGVFVGAQGVTAAGGLLLQVMPKAARDEALVATLESRVSQLSGFTPLLRSGKTLPDMFEQLLGDLGLVILPEIQLLRFDCRCSFTRVLGALKMLGEAELQDMIEKDNGAEATCEFCSEVYQASSDHLAQLIDDLRTESVGS.

2 cysteine pairs are disulfide-bonded: Cys240/Cys242 and Cys273/Cys276.

The protein belongs to the HSP33 family. In terms of processing, under oxidizing conditions two disulfide bonds are formed involving the reactive cysteines. Under reducing conditions zinc is bound to the reactive cysteines and the protein is inactive.

Its subcellular location is the cytoplasm. Redox regulated molecular chaperone. Protects both thermally unfolding and oxidatively damaged proteins from irreversible aggregation. Plays an important role in the bacterial defense system toward oxidative stress. The chain is 33 kDa chaperonin from Rippkaea orientalis (strain PCC 8801 / RF-1) (Cyanothece sp. (strain PCC 8801)).